Reading from the N-terminus, the 361-residue chain is tRNA-specific 2-thiouridylase MnmA (361 aa).

ATP-binding positions include 8–15 and Met34; that span reads AMSGGVDS. Catalysis depends on Cys104, which acts as the Nucleophile. A disulfide bond links Cys104 and Cys202. Gly128 contributes to the ATP binding site. The segment at 152–154 is interaction with tRNA; that stretch reads KDQ. The active-site Cysteine persulfide intermediate is Cys202. Positions 307–308 are interaction with tRNA; that stretch reads RY.

The protein belongs to the MnmA/TRMU family.

It localises to the cytoplasm. The catalysed reaction is S-sulfanyl-L-cysteinyl-[protein] + uridine(34) in tRNA + AH2 + ATP = 2-thiouridine(34) in tRNA + L-cysteinyl-[protein] + A + AMP + diphosphate + H(+). Its function is as follows. Catalyzes the 2-thiolation of uridine at the wobble position (U34) of tRNA, leading to the formation of s(2)U34. This chain is tRNA-specific 2-thiouridylase MnmA, found in Caldicellulosiruptor saccharolyticus (strain ATCC 43494 / DSM 8903 / Tp8T 6331).